The chain runs to 838 residues: Protein P (838 aa).

The interval 1 to 179 is terminal protein domain (TP); it reads MPLSYQHFRK…FCGSPYSWEQ (179 aa). The segment at 180-341 is spacer; that stretch reads ELQHSQRHGD…YCLSHLVNLL (162 aa). The tract at residues 218-242 is disordered; the sequence is LGLQPHQGPLATSQPGRSGSIRPRA. The polymerase/reverse transcriptase domain (RT) stretch occupies residues 342 to 685; sequence EDWGPCVEHG…YLNLYPVARQ (344 aa). Positions 352–595 constitute a Reverse transcriptase domain; sequence EHHIRIPRTP…YSLNFMGYVI (244 aa). Mg(2+) contacts are provided by D424, D546, and D547.

This sequence belongs to the hepadnaviridae P protein family.

It carries out the reaction DNA(n) + a 2'-deoxyribonucleoside 5'-triphosphate = DNA(n+1) + diphosphate. It catalyses the reaction Endonucleolytic cleavage to 5'-phosphomonoester.. Activated by host HSP70 and HSP40 in vitro to be able to bind the epsilon loop of the pgRNA. Because deletion of the RNase H region renders the protein partly chaperone-independent, the chaperones may be needed indirectly to relieve occlusion of the RNA-binding site by this domain. Inhibited by several reverse-transcriptase inhibitors: Lamivudine, Adefovir and Entecavir. Functionally, multifunctional enzyme that converts the viral RNA genome into dsDNA in viral cytoplasmic capsids. This enzyme displays a DNA polymerase activity that can copy either DNA or RNA templates, and a ribonuclease H (RNase H) activity that cleaves the RNA strand of RNA-DNA heteroduplexes in a partially processive 3'- to 5'-endonucleasic mode. Neo-synthesized pregenomic RNA (pgRNA) are encapsidated together with the P protein, and reverse-transcribed inside the nucleocapsid. Initiation of reverse-transcription occurs first by binding the epsilon loop on the pgRNA genome, and is initiated by protein priming, thereby the 5'-end of (-)DNA is covalently linked to P protein. Partial (+)DNA is synthesized from the (-)DNA template and generates the relaxed circular DNA (RC-DNA) genome. After budding and infection, the RC-DNA migrates in the nucleus, and is converted into a plasmid-like covalently closed circular DNA (cccDNA). The activity of P protein does not seem to be necessary for cccDNA generation, and is presumably released from (+)DNA by host nuclear DNA repair machinery. This Homo sapiens (Human) protein is Protein P.